A 552-amino-acid polypeptide reads, in one-letter code: MSTFGYRRELSKYEDIDEDELLASLTEEELKELERELEDIEPDRNLPVGQRQKSLTEKTPTGTFSREALMAYWERETRKLLEKERLGACEKDSEQEEDNSEDIQEECFTESNSEVSEEAYTEEDDEEEEEEEEEEEDEDDSDDEDEEKQNSAASERPVNCEDGRSSSHVRHKKCSNAKNSENLFNGHDGKDTENLSFKSSAIHPCGNPTVIEDALEKVRSNDPETTEVNLNNIENITSQMLIQFSQALRDNTVVKSFSLANTHADDNVAIAIAGMLKVNQHITSLNIESNFITGKGVLAIMRALQHNKVLTELRFHNQRHIMGSQVEMDIVKLLKENTTLVKLGYHFDLAGPRMSMTSILTRNMDKQRQKRMQEQRQQEYGCDGAINPKTKVLQKGTPRSSPYTSPKSSPWSSPKLPRKSAPAKSQPPAPAPPPPPPPPPPPPPPPPPVIPDKKAPTRNIAEVIKQQESSRKALQNGQKKKKGKKGKKHENSILKEIKDSLKSVSDRKSEEGSRPSTRPSTPQRSLHDNLMEAIRASSIKQLRRVEVPEALR.

An interaction with tropomyosin alpha region spans residues 1-47; it reads MSTFGYRRELSKYEDIDEDELLASLTEEELKELERELEDIEPDRNLP. 2 interaction with actin regions span residues 1 to 169 and 170 to 498; these read MSTF…SSHV and RHKK…KEIK. Positions 13–46 form a coiled coil; sequence YEDIDEDELLASLTEEELKELERELEDIEPDRNL. Disordered stretches follow at residues 33-67, 87-191, and 364-531; these read LERELEDIEPDRNLPVGQRQKSLTEKTPTGTFSRE, GACE…DGKD, and MDKQ…DNLM. A compositionally biased stretch (polar residues) spans 51 to 64; it reads RQKSLTEKTPTGTF. The stretch at 86 to 151 forms a coiled coil; the sequence is LGACEKDSEQ…DDEDEEKQNS (66 aa). 2 stretches are compositionally biased toward acidic residues: residues 93–108 and 115–147; these read SEQEEDNSEDIQEECF and VSEEAYTEEDDEEEEEEEEEEEDEDDSDDEDEE. The segment covering 364 to 377 has biased composition (basic and acidic residues); the sequence is MDKQRQKRMQEQRQ. Over residues 398-415 the composition is skewed to low complexity; the sequence is PRSSPYTSPKSSPWSSPK. The segment covering 425-450 has biased composition (pro residues); sequence SQPPAPAPPPPPPPPPPPPPPPPPVI. Residues 478-488 are compositionally biased toward basic residues; it reads QKKKKGKKGKK. A compositionally biased stretch (basic and acidic residues) spans 489–513; it reads HENSILKEIKDSLKSVSDRKSEEGS. Positions 514–524 are enriched in polar residues; it reads RPSTRPSTPQR. The tract at residues 526-545 is interaction with actin 3; that stretch reads LHDNLMEAIRASSIKQLRRV. In terms of domain architecture, WH2 spans 526 to 545; it reads LHDNLMEAIRASSIKQLRRV.

Belongs to the tropomodulin family. In terms of assembly, can bind at least three actin monomers and thereby provides a nucleus for actin filament formation. Interacts (via N-terminus) with tropomyosin alpha (TPM1) (via N-terminus). May also interact with TPM2 (via N-terminus).

It localises to the cytoplasm. It is found in the myofibril. Its subcellular location is the sarcomere. The protein localises to the m line. The protein resides in the cytoskeleton. Mediates nucleation of actin filaments and thereby promotes actin polymerization. Plays a role in the regulation of actin filament length. Required for normal sarcomere organization in the heart, and for normal heart function. The polypeptide is Leiomodin-2 (LMOD2) (Gallus gallus (Chicken)).